Reading from the N-terminus, the 274-residue chain is Beta-lactamase OXA-9 (274 aa).

Residues 1–24 form the signal peptide; that stretch reads MKKILLLHMLVFVSATLPISSVAS. Ser58 serves as the catalytic Acyl-ester intermediate. At Lys61 the chain carries N6-carboxylysine. 206-208 serves as a coordination point for substrate; that stretch reads KSG.

The protein belongs to the class-D beta-lactamase family.

It carries out the reaction a beta-lactam + H2O = a substituted beta-amino acid. In terms of biological role, oxacillin-hydrolyzing beta-lactamase. Confers resistance to beta-lactam antibiotics but at a significantly lower level than the TEM bla gene product. This Klebsiella aerogenes (Enterobacter aerogenes) protein is Beta-lactamase OXA-9 (bla).